The sequence spans 401 residues: 26S proteasome regulatory subunit 6A (401 aa).

Residue Gly-189–Thr-196 participates in ATP binding.

The protein belongs to the AAA ATPase family. In terms of assembly, the 26S proteasome consists of a 20S proteasome core and two 19S regulatory subunits. The 20S proteasome core is composed of 28 subunits that are arranged in four stacked rings, resulting in a barrel-shaped structure. The two end rings are each formed by seven alpha subunits, and the two central rings are each formed by seven beta subunits. The catalytic chamber with the active sites is on the inside of the barrel.

It localises to the cytoplasm. Its subcellular location is the nucleus. Acts as a regulatory subunit of the 26S proteasome which degrades poly-ubiquitinated proteins in the cytoplasm and in the nucleus. It is essential for the regulated turnover of proteins and for the removal of misfolded proteins. The proteasome is a multicatalytic proteinase complex that is characterized by its ability to cleave peptides with Arg, Phe, Tyr, Leu, and Glu adjacent to the leaving group at neutral or slightly basic pH. The sequence is that of 26S proteasome regulatory subunit 6A (RPT5) from Encephalitozoon cuniculi (strain GB-M1) (Microsporidian parasite).